The sequence spans 205 residues: Small ribosomal subunit protein uS4 (205 aa).

The region spanning 110–172 (RRLQTIIYRK…VGSPITKEKL (63 aa)) is the S4 RNA-binding domain. The interval 173 to 205 (MAKPQPASAPKAAAAPKAAAAPAEAAAAPKKEE) is disordered. Low complexity predominate over residues 174–205 (AKPQPASAPKAAAAPKAAAAPAEAAAAPKKEE).

The protein belongs to the universal ribosomal protein uS4 family. Part of the 30S ribosomal subunit. Contacts protein S5. The interaction surface between S4 and S5 is involved in control of translational fidelity.

Its function is as follows. One of the primary rRNA binding proteins, it binds directly to 16S rRNA where it nucleates assembly of the body of the 30S subunit. Functionally, with S5 and S12 plays an important role in translational accuracy. This chain is Small ribosomal subunit protein uS4, found in Methanocella arvoryzae (strain DSM 22066 / NBRC 105507 / MRE50).